The following is a 552-amino-acid chain: 5'-AMP-activated protein kinase catalytic subunit alpha-2 (552 aa).

Residues 16-268 (YVLGDTLGVG…IKDIREHEWF (253 aa)) form the Protein kinase domain. ATP-binding positions include 22 to 30 (LGVGTFGKV) and Lys-45. Asp-139 functions as the Proton acceptor in the catalytic mechanism. Thr-172 bears the Phosphothreonine; by LKB1 and CaMKK2 mark. Thr-258 carries the phosphothreonine modification. The interval 291 to 376 (EAVKEVCEKF…PERMPPLIAD (86 aa)) is AIS. A Phosphoserine modification is found at Ser-377. The segment at 478-520 (EQRSGSSTPQRSCSAAGLHRPRSSVDSSTAENHSLSGSLTGSL) is disordered. Residues 480 to 490 (RSGSSTPQRSC) are compositionally biased toward polar residues. Ser-491 is modified (phosphoserine). Positions 501–510 (SVDSSTAENH) are enriched in polar residues. Residues 511–520 (SLSGSLTGSL) are compositionally biased toward low complexity.

It belongs to the protein kinase superfamily. CAMK Ser/Thr protein kinase family. SNF1 subfamily. As to quaternary structure, AMPK is a heterotrimer of an alpha catalytic subunit (PRKAA1 or PRKAA2), a beta (PRKAB1 or PRKAB2) and a gamma non-catalytic subunits (PRKAG1, PRKAG2 or PRKAG3). Interacts with FNIP1 and FNIP2. Associates with internalized INSR complexes on Golgi/endosomal membranes; PRKAA2/AMPK2 together with ATIC and HACD3/PTPLAD1 is proposed to be part of a signaling network regulating INSR autophosphorylation and endocytosis. Interacts with DUSP29. Interacts with ARF6. The phosphorylated form at Thr-172 mediated by CamKK2 interacts with ACSS2. Requires Mg(2+) as cofactor. Ubiquitinated. In terms of processing, phosphorylated at Thr-172 by STK11/LKB1 in complex with STE20-related adapter-alpha (STRADA) pseudo kinase and CAB39. Also phosphorylated at Thr-172 by CAMKK2; triggered by a rise in intracellular calcium ions, without detectable changes in the AMP/ATP ratio. CAMKK1 can also phosphorylate Thr-172, but at much lower level. Dephosphorylated by protein phosphatase 2A and 2C (PP2A and PP2C). Phosphorylated by ULK1; leading to negatively regulate AMPK activity and suggesting the existence of a regulatory feedback loop between ULK1 and AMPK. Dephosphorylated by PPM1A and PPM1B at Thr-172 (mediated by STK11/LKB1). In terms of tissue distribution, skeletal muscle, lower levels in liver, heart and kidney.

It localises to the cytoplasm. The protein localises to the nucleus. It catalyses the reaction L-seryl-[protein] + ATP = O-phospho-L-seryl-[protein] + ADP + H(+). It carries out the reaction L-threonyl-[protein] + ATP = O-phospho-L-threonyl-[protein] + ADP + H(+). The catalysed reaction is L-seryl-[acetyl-CoA carboxylase] + ATP = O-phospho-L-seryl-[acetyl-CoA carboxylase] + ADP + H(+). The enzyme catalyses L-seryl-[3-hydroxy-3-methylglutaryl-coenzyme A reductase] + ATP = O-phospho-L-seryl-[3-hydroxy-3-methylglutaryl-coenzyme A reductase] + ADP + H(+). Its activity is regulated as follows. Activated by phosphorylation on Thr-172. Binding of AMP to non-catalytic gamma subunit (PRKAG1, PRKAG2 or PRKAG3) results in allosteric activation, inducing phosphorylation on Thr-172. AMP-binding to gamma subunit also sustains activity by preventing dephosphorylation of Thr-172. ADP also stimulates Thr-172 phosphorylation, without stimulating already phosphorylated AMPK. ATP promotes dephosphorylation of Thr-172, rendering the enzyme inactive. Under physiological conditions AMPK mainly exists in its inactive form in complex with ATP, which is much more abundant than AMP. Selectively inhibited by compound C (6-[4-(2-Piperidin-1-yl-ethoxy)-phenyl)]-3-pyridin-4-yl-pyyrazolo[1,5-a] pyrimidine. Activated by resveratrol, a natural polyphenol present in red wine, and S17834, a synthetic polyphenol. Salicylate/aspirin directly activates kinase activity, primarily by inhibiting Thr-172 dephosphorylation. In terms of biological role, catalytic subunit of AMP-activated protein kinase (AMPK), an energy sensor protein kinase that plays a key role in regulating cellular energy metabolism. In response to reduction of intracellular ATP levels, AMPK activates energy-producing pathways and inhibits energy-consuming processes: inhibits protein, carbohydrate and lipid biosynthesis, as well as cell growth and proliferation. AMPK acts via direct phosphorylation of metabolic enzymes, and by longer-term effects via phosphorylation of transcription regulators. Regulates lipid synthesis by phosphorylating and inactivating lipid metabolic enzymes such as ACACA, ACACB, GYS1, HMGCR and LIPE; regulates fatty acid and cholesterol synthesis by phosphorylating acetyl-CoA carboxylase (ACACA and ACACB) and hormone-sensitive lipase (LIPE) enzymes, respectively. Promotes lipolysis of lipid droplets by mediating phosphorylation of isoform 1 of CHKA (CHKalpha2). Regulates insulin-signaling and glycolysis by phosphorylating IRS1, PFKFB2 and PFKFB3. Involved in insulin receptor/INSR internalization. AMPK stimulates glucose uptake in muscle by increasing the translocation of the glucose transporter SLC2A4/GLUT4 to the plasma membrane, possibly by mediating phosphorylation of TBC1D4/AS160. Regulates transcription and chromatin structure by phosphorylating transcription regulators involved in energy metabolism such as CRTC2/TORC2, FOXO3, histone H2B, HDAC5, MEF2C, MLXIPL/ChREBP, EP300, HNF4A, p53/TP53, SREBF1, SREBF2 and PPARGC1A. Acts as a key regulator of glucose homeostasis in liver by phosphorylating CRTC2/TORC2, leading to CRTC2/TORC2 sequestration in the cytoplasm. In response to stress, phosphorylates 'Ser-36' of histone H2B (H2BS36ph), leading to promote transcription. Acts as a key regulator of cell growth and proliferation by phosphorylating FNIP1, TSC2, RPTOR, WDR24 and ATG1/ULK1: in response to nutrient limitation, negatively regulates the mTORC1 complex by phosphorylating RPTOR component of the mTORC1 complex and by phosphorylating and activating TSC2. Also phosphorylates and inhibits GATOR2 subunit WDR24 in response to nutrient limitation, leading to suppress glucose-mediated mTORC1 activation. In response to energetic stress, phosphorylates FNIP1, inactivating the non-canonical mTORC1 signaling, thereby promoting nuclear translocation of TFEB and TFE3, and inducing transcription of lysosomal or autophagy genes. In response to nutrient limitation, promotes autophagy by phosphorylating and activating ATG1/ULK1. In that process, it also activates WDR45/WIPI4. Phosphorylates CASP6, thereby preventing its autoprocessing and subsequent activation. AMPK also acts as a regulator of circadian rhythm by mediating phosphorylation of CRY1, leading to destabilize it. May regulate the Wnt signaling pathway by phosphorylating CTNNB1, leading to stabilize it. Also acts as a regulator of cellular polarity by remodeling the actin cytoskeleton; probably by indirectly activating myosin. Also phosphorylates CFTR, EEF2K, KLC1, NOS3 and SLC12A1. Plays an important role in the differential regulation of pro-autophagy (composed of PIK3C3, BECN1, PIK3R4 and UVRAG or ATG14) and non-autophagy (composed of PIK3C3, BECN1 and PIK3R4) complexes, in response to glucose starvation. Can inhibit the non-autophagy complex by phosphorylating PIK3C3 and can activate the pro-autophagy complex by phosphorylating BECN1. Upon glucose starvation, promotes ARF6 activation in a kinase-independent manner leading to cell migration. Upon glucose deprivation mediates the phosphorylation of ACSS2 at 'Ser-659', which exposes the nuclear localization signal of ACSS2, required for its interaction with KPNA1 and nuclear translocation. Upon stress, regulates mitochondrial fragmentation through phosphorylation of MTFR1L. This is 5'-AMP-activated protein kinase catalytic subunit alpha-2 (Prkaa2) from Rattus norvegicus (Rat).